A 346-amino-acid chain; its full sequence is Fe(3+) ions import ATP-binding protein FbpC 1 (346 aa).

In terms of domain architecture, ABC transporter spans 5–235; sequence LEVDGVDKSF…PIDVPTAEFI (231 aa). 37–44 lines the ATP pocket; the sequence is GPSGCGKT.

It belongs to the ABC transporter superfamily. Fe(3+) ion importer (TC 3.A.1.10) family. The complex is composed of two ATP-binding proteins (FbpC), two transmembrane proteins (FbpB) and a solute-binding protein (FbpA).

The protein resides in the cell membrane. The catalysed reaction is Fe(3+)(out) + ATP + H2O = Fe(3+)(in) + ADP + phosphate + H(+). Functionally, part of the ABC transporter complex FbpABC involved in Fe(3+) ions import. Responsible for energy coupling to the transport system. The chain is Fe(3+) ions import ATP-binding protein FbpC 1 from Rhodococcus jostii (strain RHA1).